The primary structure comprises 612 residues: 2-isopropylmalate synthase B (612 aa).

The 274-residue stretch at Val71–Leu344 folds into the Pyruvate carboxyltransferase domain. The a divalent metal cation site is built by Asp80, His277, and Asn313.

The protein belongs to the alpha-IPM synthase/homocitrate synthase family. LeuA type 1 subfamily. Homodimer. A divalent metal cation is required as a cofactor.

It catalyses the reaction 3-methyl-2-oxobutanoate + acetyl-CoA + H2O = (2S)-2-isopropylmalate + CoA + H(+). Its pathway is amino-acid biosynthesis; L-leucine biosynthesis; L-leucine from 3-methyl-2-oxobutanoate: step 1/4. Catalyzes the condensation of the acetyl group of acetyl-CoA with 3-methyl-2-oxobutanoate (2-oxoisovalerate) to form 3-carboxy-3-hydroxy-4-methylpentanoate (2-isopropylmalate). The chain is 2-isopropylmalate synthase B (IPMSB) from Solanum pennellii (Tomato).